Reading from the N-terminus, the 603-residue chain is Ankyrin repeat and LEM domain-containing protein 2 homolog (603 aa).

The helical; Signal-anchor for type III membrane protein transmembrane segment at 2-22 threads the bilayer; the sequence is GRKSAILAVILAIIYFRSNFS. ANK repeat units lie at residues 161–190 and 221–250; these read FRYN…NIDF and NSDT…TDRT. Disordered stretches follow at residues 446 to 465 and 505 to 538; these read ISEN…DDDD and LPPP…PPPT. Acidic residues predominate over residues 456–465; it reads DSADDEDDDD.

The protein belongs to the ANKLE2 family. Interacts with baf-1. Interacts with protein phosphatase 2A (PP2A) components.

It localises to the nucleus membrane. Functionally, involved in mitotic nuclear envelope reassembly by promoting dephosphorylation of baf-1 during mitotic exit. Coordinates the control of baf-1 dephosphorylation by inhibiting VRK1 kinase and promoting dephosphorylation of baf-1 by protein phosphatase 2A (PP2A), thereby facilitating nuclear envelope assembly. It is unclear whether it acts as a real PP2A regulatory subunit or whether it is involved in recruitment of the PP2A complex. The protein is Ankyrin repeat and LEM domain-containing protein 2 homolog (lem-4) of Caenorhabditis elegans.